A 403-amino-acid chain; its full sequence is Na(+)-translocating NADH-quinone reductase subunit B (403 aa).

The next 4 membrane-spanning stretches (helical) occupy residues methionine 56 to glycine 76, alanine 121 to phenylalanine 141, leucine 164 to glycine 184, and phenylalanine 195 to alanine 212. Threonine 230 carries the post-translational modification FMN phosphoryl threonine. 6 helical membrane passes run alanine 237–isoleucine 257, threonine 265–tryptophan 285, isoleucine 287–serine 307, methionine 312–phenylalanine 332, tryptophan 348–phenylalanine 368, and glycine 371–valine 391.

It belongs to the NqrB/RnfD family. In terms of assembly, composed of six subunits; NqrA, NqrB, NqrC, NqrD, NqrE and NqrF. It depends on FMN as a cofactor.

Its subcellular location is the cell inner membrane. The catalysed reaction is a ubiquinone + n Na(+)(in) + NADH + H(+) = a ubiquinol + n Na(+)(out) + NAD(+). Functionally, NQR complex catalyzes the reduction of ubiquinone-1 to ubiquinol by two successive reactions, coupled with the transport of Na(+) ions from the cytoplasm to the periplasm. NqrA to NqrE are probably involved in the second step, the conversion of ubisemiquinone to ubiquinol. This is Na(+)-translocating NADH-quinone reductase subunit B from Azotobacter vinelandii (strain DJ / ATCC BAA-1303).